The primary structure comprises 460 residues: Argininosuccinate lyase (460 aa).

The protein belongs to the lyase 1 family. Argininosuccinate lyase subfamily.

It is found in the cytoplasm. The catalysed reaction is 2-(N(omega)-L-arginino)succinate = fumarate + L-arginine. It participates in amino-acid biosynthesis; L-arginine biosynthesis; L-arginine from L-ornithine and carbamoyl phosphate: step 3/3. This Campylobacter hominis (strain ATCC BAA-381 / DSM 21671 / CCUG 45161 / LMG 19568 / NCTC 13146 / CH001A) protein is Argininosuccinate lyase.